We begin with the raw amino-acid sequence, 220 residues long: Deoxyribose-phosphate aldolase (220 aa).

Aspartate 89 (proton donor/acceptor) is an active-site residue. The active-site Schiff-base intermediate with acetaldehyde is lysine 151. Lysine 180 serves as the catalytic Proton donor/acceptor.

This sequence belongs to the DeoC/FbaB aldolase family. DeoC type 1 subfamily.

The protein localises to the cytoplasm. It carries out the reaction 2-deoxy-D-ribose 5-phosphate = D-glyceraldehyde 3-phosphate + acetaldehyde. The protein operates within carbohydrate degradation; 2-deoxy-D-ribose 1-phosphate degradation; D-glyceraldehyde 3-phosphate and acetaldehyde from 2-deoxy-alpha-D-ribose 1-phosphate: step 2/2. Its function is as follows. Catalyzes a reversible aldol reaction between acetaldehyde and D-glyceraldehyde 3-phosphate to generate 2-deoxy-D-ribose 5-phosphate. In Macrococcus caseolyticus (strain JCSC5402) (Macrococcoides caseolyticum), this protein is Deoxyribose-phosphate aldolase.